The chain runs to 222 residues: GTP cyclohydrolase 1 (222 aa).

The Zn(2+) site is built by Cys111, His114, and Cys182.

This sequence belongs to the GTP cyclohydrolase I family. In terms of assembly, toroid-shaped homodecamer, composed of two pentamers of five dimers.

It catalyses the reaction GTP + H2O = 7,8-dihydroneopterin 3'-triphosphate + formate + H(+). It functions in the pathway cofactor biosynthesis; 7,8-dihydroneopterin triphosphate biosynthesis; 7,8-dihydroneopterin triphosphate from GTP: step 1/1. This is GTP cyclohydrolase 1 from Klebsiella pneumoniae subsp. pneumoniae (strain ATCC 700721 / MGH 78578).